Consider the following 410-residue polypeptide: SPbeta prophage-derived uncharacterized protein YonV (410 aa).

This is SPbeta prophage-derived uncharacterized protein YonV (yonV) from Bacillus subtilis (strain 168).